The following is a 472-amino-acid chain: Adenosylhomocysteinase (472 aa).

The substrate site is built by threonine 64, aspartate 138, and glutamate 198. 199-201 (TTT) is an NAD(+) binding site. Substrate contacts are provided by lysine 228 and aspartate 232. Residues asparagine 233, 262-267 (GFGDVG), glutamate 285, asparagine 320, 341-343 (IGH), and asparagine 386 contribute to the NAD(+) site.

The protein belongs to the adenosylhomocysteinase family. It depends on NAD(+) as a cofactor.

Its subcellular location is the cytoplasm. The enzyme catalyses S-adenosyl-L-homocysteine + H2O = L-homocysteine + adenosine. Its pathway is amino-acid biosynthesis; L-homocysteine biosynthesis; L-homocysteine from S-adenosyl-L-homocysteine: step 1/1. Functionally, may play a key role in the regulation of the intracellular concentration of adenosylhomocysteine. The chain is Adenosylhomocysteinase from Prochlorococcus marinus (strain MIT 9301).